Reading from the N-terminus, the 483-residue chain is MHHMTLAEIARGLADKKFSSVELTQTLLARIAQLDPQINSFISLTQDLALSQAKAADERRANGESGALLGAPIAHKDLFCTQGIRTSCGSKMLDNFKAPYDATVVAKLAAAGAVTLGKTNMDEFAMGSANESSWYGAVKNPWNLEHVPGGSSGGSAAAVAARLLPAATATDTGGSIRQPAAFTNLTGLKPTYGRVSRWGMIAYASSLDQGGPLARTAEDCAILLQGMAGFDPNDSTSIDEPVPDYSAGLTGSLQGLRIGVPKEYFSAGLDPRIAELIHNSIKELEKLGAVIKEISLPNMQHAIPAYYVIAPAEASSNLSRFDGVRFGYRCENPENLEDLYKRSRGEGFGSEVQRRIMVGAYALSAGYYDAYYLKAQKIRRLVKNDFMTAFNEVDIILGPTTPNPAWKLGAKSSDPVAAYLEDVYTITANLAGLPGLSMPAGFVDGLPVGVQLLAPYFQEGRLLNVAHQYQLNTDWHTRTPTGF.

Catalysis depends on charge relay system residues Lys76 and Ser151. Ser175 acts as the Acyl-ester intermediate in catalysis.

It belongs to the amidase family. GatA subfamily. As to quaternary structure, heterotrimer of A, B and C subunits.

It carries out the reaction L-glutamyl-tRNA(Gln) + L-glutamine + ATP + H2O = L-glutaminyl-tRNA(Gln) + L-glutamate + ADP + phosphate + H(+). In terms of biological role, allows the formation of correctly charged Gln-tRNA(Gln) through the transamidation of misacylated Glu-tRNA(Gln) in organisms which lack glutaminyl-tRNA synthetase. The reaction takes place in the presence of glutamine and ATP through an activated gamma-phospho-Glu-tRNA(Gln). The protein is Glutamyl-tRNA(Gln) amidotransferase subunit A of Pseudomonas fluorescens (strain ATCC BAA-477 / NRRL B-23932 / Pf-5).